The sequence spans 1214 residues: Filamin-A-interacting protein 1 (1214 aa).

The segment covering M1–H15 has biased composition (polar residues). A disordered region spans residues M1 to L73. Composition is skewed to basic and acidic residues over residues P32–D47 and P61–L73. A Phosphoserine modification is found at S138. Coiled-coil stretches lie at residues D192–S581 and P624–L778. 2 disordered regions span residues K875 to G898 and K949 to R976. Phosphoserine is present on S979. The tract at residues V1104–Q1192 is disordered. Over residues V1126–T1140 the composition is skewed to low complexity. A compositionally biased stretch (polar residues) spans R1141–T1157. Low complexity predominate over residues A1169 to G1180.

This sequence belongs to the FILIP1 family. As to quaternary structure, interacts with FLNA. Interacts with RHOD (in GTP-bound form).

The protein resides in the cytoplasm. It is found in the cytoskeleton. Its function is as follows. By acting through a filamin-A/F-actin axis, it controls the start of neocortical cell migration from the ventricular zone. May be able to induce the degradation of filamin-A. The sequence is that of Filamin-A-interacting protein 1 (Filip1) from Mus musculus (Mouse).